Consider the following 148-residue polypeptide: Large ribosomal subunit protein bL9 (148 aa).

The protein belongs to the bacterial ribosomal protein bL9 family.

Binds to the 23S rRNA. This chain is Large ribosomal subunit protein bL9, found in Pseudomonas fluorescens (strain ATCC BAA-477 / NRRL B-23932 / Pf-5).